We begin with the raw amino-acid sequence, 398 residues long: Phosphoglycerate kinase (398 aa).

Substrate is bound by residues 21–23 (DIN), Arg36, 59–62 (HFGR), Arg118, and Arg151. ATP-binding positions include Lys201, Glu323, and 353–356 (GGDT).

It belongs to the phosphoglycerate kinase family. Monomer.

It is found in the cytoplasm. It carries out the reaction (2R)-3-phosphoglycerate + ATP = (2R)-3-phospho-glyceroyl phosphate + ADP. It participates in carbohydrate degradation; glycolysis; pyruvate from D-glyceraldehyde 3-phosphate: step 2/5. This Ruegeria pomeroyi (strain ATCC 700808 / DSM 15171 / DSS-3) (Silicibacter pomeroyi) protein is Phosphoglycerate kinase.